The following is a 398-amino-acid chain: 8-amino-7-oxononanoate synthase (398 aa).

Positions 22 and 29 each coordinate substrate. G109–W110 is a binding site for pyridoxal 5'-phosphate. H141 is a substrate binding site. Residues S189, D214–H217, and T242–K245 each bind pyridoxal 5'-phosphate. At K245 the chain carries N6-(pyridoxal phosphate)lysine. T359 serves as a coordination point for substrate.

This sequence belongs to the class-II pyridoxal-phosphate-dependent aminotransferase family. BioF subfamily. As to quaternary structure, homodimer. Pyridoxal 5'-phosphate is required as a cofactor.

The enzyme catalyses 6-carboxyhexanoyl-[ACP] + L-alanine + H(+) = (8S)-8-amino-7-oxononanoate + holo-[ACP] + CO2. It participates in cofactor biosynthesis; biotin biosynthesis. Functionally, catalyzes the decarboxylative condensation of pimeloyl-[acyl-carrier protein] and L-alanine to produce 8-amino-7-oxononanoate (AON), [acyl-carrier protein], and carbon dioxide. This Gluconacetobacter diazotrophicus (strain ATCC 49037 / DSM 5601 / CCUG 37298 / CIP 103539 / LMG 7603 / PAl5) protein is 8-amino-7-oxononanoate synthase.